Consider the following 513-residue polypeptide: Probable DNA ligase (513 aa).

Residue Glu-215 coordinates ATP. Lys-217 serves as the catalytic N6-AMP-lysine intermediate. 6 residues coordinate ATP: Arg-222, Arg-237, Glu-266, Phe-306, Arg-378, and Lys-384.

The protein belongs to the ATP-dependent DNA ligase family. Mg(2+) is required as a cofactor.

The enzyme catalyses ATP + (deoxyribonucleotide)n-3'-hydroxyl + 5'-phospho-(deoxyribonucleotide)m = (deoxyribonucleotide)n+m + AMP + diphosphate.. In terms of biological role, DNA ligase that seals nicks in double-stranded DNA during DNA replication, DNA recombination and DNA repair. The polypeptide is Probable DNA ligase (Mycobacterium marinum (strain ATCC BAA-535 / M)).